Reading from the N-terminus, the 196-residue chain is Ribosome maturation factor RimP (196 aa).

This sequence belongs to the RimP family.

It is found in the cytoplasm. Required for maturation of 30S ribosomal subunits. In Dinoroseobacter shibae (strain DSM 16493 / NCIMB 14021 / DFL 12), this protein is Ribosome maturation factor RimP.